Here is a 577-residue protein sequence, read N- to C-terminus: Arginine--tRNA ligase (577 aa).

Residues 122-132 (PNVAKEMHVGH) carry the 'HIGH' region motif.

This sequence belongs to the class-I aminoacyl-tRNA synthetase family. In terms of assembly, monomer.

The protein localises to the cytoplasm. The catalysed reaction is tRNA(Arg) + L-arginine + ATP = L-arginyl-tRNA(Arg) + AMP + diphosphate. The sequence is that of Arginine--tRNA ligase from Salmonella gallinarum (strain 287/91 / NCTC 13346).